The primary structure comprises 317 residues: Tumor-associated calcium signal transducer 2 (317 aa).

The first 24 residues, 1–24 (MARGLDLAPLLLLLLAMATRFCTA), serve as a signal peptide directing secretion. Residues 25–270 (QSNCTCPTNK…QFSMKRLTAG (246 aa)) lie on the Extracellular side of the membrane. Asn-27 is a glycosylation site (N-linked (GlcNAc...) asparagine). Positions 64-139 (TSKCLLLKAR…TDKGDQSLRC (76 aa)) constitute a Thyroglobulin type-1 domain. Cystine bridges form between Cys-67-Cys-102, Cys-113-Cys-119, and Cys-121-Cys-139. N-linked (GlcNAc...) asparagine glycosylation occurs at Asn-114. N-linked (GlcNAc...) asparagine glycans are attached at residues Asn-162 and Asn-202. Residues 271–291 (VIAVIAVVSVAVVAGVVVLVV) traverse the membrane as a helical segment. Residues 292 to 317 (TKRRKSGKYKKVELKELGEMRSEPSL) lie on the Cytoplasmic side of the membrane.

It belongs to the EPCAM family. As to expression, expressed in kidney, lung, ovary and testis. High levels of expression in immortalized keratinocytes.

The protein resides in the membrane. May function as a growth factor receptor. The sequence is that of Tumor-associated calcium signal transducer 2 (Tacstd2) from Mus musculus (Mouse).